Here is a 540-residue protein sequence, read N- to C-terminus: Chaperonin GroEL (540 aa).

Residues 29-32 (TLGP), 86-90 (DGTTT), Gly-413, 476-478 (NAA), and Asp-492 contribute to the ATP site.

This sequence belongs to the chaperonin (HSP60) family. As to quaternary structure, forms a cylinder of 14 subunits composed of two heptameric rings stacked back-to-back. Interacts with the co-chaperonin GroES.

The protein localises to the cytoplasm. The enzyme catalyses ATP + H2O + a folded polypeptide = ADP + phosphate + an unfolded polypeptide.. In terms of biological role, together with its co-chaperonin GroES, plays an essential role in assisting protein folding. The GroEL-GroES system forms a nano-cage that allows encapsulation of the non-native substrate proteins and provides a physical environment optimized to promote and accelerate protein folding. The protein is Chaperonin GroEL of Streptococcus pneumoniae (strain Hungary19A-6).